A 153-amino-acid polypeptide reads, in one-letter code: Ribosomal RNA large subunit methyltransferase H (153 aa).

S-adenosyl-L-methionine is bound by residues Leu70, Gly102, and 121-126; that span reads LSRMTF.

The protein belongs to the RNA methyltransferase RlmH family. As to quaternary structure, homodimer.

The protein localises to the cytoplasm. The catalysed reaction is pseudouridine(1915) in 23S rRNA + S-adenosyl-L-methionine = N(3)-methylpseudouridine(1915) in 23S rRNA + S-adenosyl-L-homocysteine + H(+). Specifically methylates the pseudouridine at position 1915 (m3Psi1915) in 23S rRNA. The chain is Ribosomal RNA large subunit methyltransferase H from Geotalea uraniireducens (strain Rf4) (Geobacter uraniireducens).